The chain runs to 887 residues: Alanine--tRNA ligase (887 aa).

4 residues coordinate Zn(2+): histidine 575, histidine 579, cysteine 677, and histidine 681.

The protein belongs to the class-II aminoacyl-tRNA synthetase family. Zn(2+) serves as cofactor.

Its subcellular location is the cytoplasm. The catalysed reaction is tRNA(Ala) + L-alanine + ATP = L-alanyl-tRNA(Ala) + AMP + diphosphate. Catalyzes the attachment of alanine to tRNA(Ala) in a two-step reaction: alanine is first activated by ATP to form Ala-AMP and then transferred to the acceptor end of tRNA(Ala). Also edits incorrectly charged Ser-tRNA(Ala) and Gly-tRNA(Ala) via its editing domain. The polypeptide is Alanine--tRNA ligase (Geobacillus kaustophilus (strain HTA426)).